A 356-amino-acid polypeptide reads, in one-letter code: Tyrosine recombinase XerS (356 aa).

The region spanning 16 to 121 is the Core-binding (CB) domain; sequence LMPWYVLEYY…ALSSLYKYLT (106 aa). A Tyr recombinase domain is found at 169 to 354; that stretch reads GFLTYIDQEH…VSDEQKNALD (186 aa). Residues arginine 210, lysine 234, histidine 306, arginine 309, and histidine 332 contribute to the active site. Tyrosine 341 functions as the O-(3'-phospho-DNA)-tyrosine intermediate in the catalytic mechanism.

This sequence belongs to the 'phage' integrase family. XerS subfamily.

It is found in the cytoplasm. Its activity is regulated as follows. FtsK is required for recombination. Its function is as follows. Site-specific tyrosine recombinase, which acts by catalyzing the cutting and rejoining of the recombining DNA molecules. Essential to convert dimers of the bacterial chromosome into monomers to permit their segregation at cell division. This Streptococcus pneumoniae serotype 4 (strain ATCC BAA-334 / TIGR4) protein is Tyrosine recombinase XerS.